The following is a 235-amino-acid chain: Ribonuclease PH (235 aa).

Phosphate-binding positions include Arg86 and 124 to 126 (GTR).

Belongs to the RNase PH family. In terms of assembly, homohexameric ring arranged as a trimer of dimers.

It carries out the reaction tRNA(n+1) + phosphate = tRNA(n) + a ribonucleoside 5'-diphosphate. Phosphorolytic 3'-5' exoribonuclease that plays an important role in tRNA 3'-end maturation. Removes nucleotide residues following the 3'-CCA terminus of tRNAs; can also add nucleotides to the ends of RNA molecules by using nucleoside diphosphates as substrates, but this may not be physiologically important. Probably plays a role in initiation of 16S rRNA degradation (leading to ribosome degradation) during starvation. The sequence is that of Ribonuclease PH from Francisella tularensis subsp. holarctica (strain FTNF002-00 / FTA).